Consider the following 82-residue polypeptide: Mu-conotoxin MrVIB (82 aa).

An N-terminal signal peptide occupies residues 1–22 (MKLTCMMIVAVLFLTAWTLVMA). Positions 23 to 49 (DDSNNGLANHFLKSRDEMEDPEASKLE) are excised as a propeptide. Disulfide bonds link Cys-53/Cys-71, Cys-60/Cys-76, and Cys-70/Cys-81.

The protein belongs to the conotoxin O1 superfamily. As to expression, expressed by the venom duct.

It is found in the secreted. MuO-conotoxins are gating-modifier toxins that inhibit sodium current by trapping the domain II voltage sensor in the closed position to prevent opening of the sodium channel. This toxin has a preference for Nav1.4/SCN4A over Nav1.2/SCN2A sodium channels. It blocks Nav channels by interacting mainly with the C-terminal part of the pore loop of domain-3. It also blocks fast-inactivating calcium current. Blocks Nav1.8/SCN10A sodium channels and has potent and long-lasting local anesthetic effects. It can also block propagation of action potentials in A- and C-fibers in sciatic nerve as well as skeletal muscle in isolated preparations. The protein is Mu-conotoxin MrVIB of Conus marmoreus (Marble cone).